Reading from the N-terminus, the 200-residue chain is Large ribosomal subunit protein uL4 (200 aa).

Residues 42 to 65 form a disordered region; the sequence is TRAQKTRSEVSGGGAKPWRQKGTG.

It belongs to the universal ribosomal protein uL4 family. In terms of assembly, part of the 50S ribosomal subunit.

In terms of biological role, one of the primary rRNA binding proteins, this protein initially binds near the 5'-end of the 23S rRNA. It is important during the early stages of 50S assembly. It makes multiple contacts with different domains of the 23S rRNA in the assembled 50S subunit and ribosome. Its function is as follows. Forms part of the polypeptide exit tunnel. This is Large ribosomal subunit protein uL4 from Vibrio vulnificus (strain CMCP6).